The primary structure comprises 111 residues: Large ribosomal subunit protein uL23 (111 aa).

Belongs to the universal ribosomal protein uL23 family. In terms of assembly, part of the 50S ribosomal subunit. Contacts protein L29, and trigger factor when it is bound to the ribosome.

Its function is as follows. One of the early assembly proteins it binds 23S rRNA. One of the proteins that surrounds the polypeptide exit tunnel on the outside of the ribosome. Forms the main docking site for trigger factor binding to the ribosome. The chain is Large ribosomal subunit protein uL23 from Chlamydia abortus (strain DSM 27085 / S26/3) (Chlamydophila abortus).